Consider the following 118-residue polypeptide: Basic phospholipase A2 PA-5 (118 aa).

Intrachain disulfides connect cysteine 11-cysteine 71, cysteine 27-cysteine 117, cysteine 29-cysteine 45, cysteine 44-cysteine 98, cysteine 51-cysteine 91, cysteine 60-cysteine 84, and cysteine 78-cysteine 89. Residues tyrosine 28, glycine 30, and glycine 32 each coordinate Ca(2+). Histidine 48 is an active-site residue. Ca(2+) is bound at residue aspartate 49. The active site involves aspartate 92.

This sequence belongs to the phospholipase A2 family. Group I subfamily. D49 sub-subfamily. The cofactor is Ca(2+). As to expression, expressed by the venom gland.

It localises to the secreted. It catalyses the reaction a 1,2-diacyl-sn-glycero-3-phosphocholine + H2O = a 1-acyl-sn-glycero-3-phosphocholine + a fatty acid + H(+). Functionally, PLA2 catalyzes the calcium-dependent hydrolysis of the 2-acyl groups in 3-sn-phosphoglycerides. The protein is Basic phospholipase A2 PA-5 of Pseudechis australis (Mulga snake).